A 242-amino-acid chain; its full sequence is Venom nerve growth factor 1 (242 aa).

An N-terminal signal peptide occupies residues Met-1–Ala-18. The propeptide occupies Ala-19 to Arg-125. A disordered region spans residues Val-26–Leu-69. Residues Pro-31–Gln-43 show a composition bias toward polar residues. A compositionally biased stretch (basic and acidic residues) spans Arg-52–Asp-66. 3 cysteine pairs are disulfide-bonded: Cys-139-Cys-203, Cys-181-Cys-231, and Cys-191-Cys-233. The N-linked (GlcNAc...) asparagine glycan is linked to Asn-147.

Belongs to the NGF-beta family. As to quaternary structure, homodimer; non-covalently linked. Expressed by the venom gland.

Its subcellular location is the secreted. Its function is as follows. Nerve growth factor is important for the development and maintenance of the sympathetic and sensory nervous systems. It stimulates division and differentiation of sympathetic and embryonic sensory neurons as well as basal forebrain cholinergic neurons in the brain. Its relevance in the snake venom is not clear. However, it has been shown to inhibit metalloproteinase-dependent proteolysis of platelet glycoprotein Ib alpha, suggesting a metalloproteinase inhibition to prevent metalloprotease autodigestion and/or protection against prey proteases. Binds a lipid between the two protein chains in the homodimer. The lipid-bound form promotes histamine relase from mouse mast cells, contrary to the lipid-free form. The protein is Venom nerve growth factor 1 of Demansia vestigiata (Lesser black whip snake).